The chain runs to 527 residues: Peptide chain release factor 3 (527 aa).

The tr-type G domain maps to 9–278; that stretch reads NKRRTFAIIS…GLTQWAPKPQ (270 aa). GTP is bound by residues 18 to 25, 86 to 90, and 140 to 143; these read SHPDAGKT, DTPGH, and NKLD.

The protein belongs to the TRAFAC class translation factor GTPase superfamily. Classic translation factor GTPase family. PrfC subfamily.

It localises to the cytoplasm. In terms of biological role, increases the formation of ribosomal termination complexes and stimulates activities of RF-1 and RF-2. It binds guanine nucleotides and has strong preference for UGA stop codons. It may interact directly with the ribosome. The stimulation of RF-1 and RF-2 is significantly reduced by GTP and GDP, but not by GMP. This is Peptide chain release factor 3 from Haemophilus influenzae (strain PittEE).